The sequence spans 508 residues: Photosystem II CP47 reaction center protein (508 aa).

The next 6 membrane-spanning stretches (helical) occupy residues 21 to 36 (AVHI…WAGS), 101 to 115 (IVFS…IWHW), 140 to 156 (GIHL…FGAF), 203 to 218 (IAAG…FHLS), 237 to 252 (VLSS…AFVV), and 457 to 472 (TFAL…HGAR).

It belongs to the PsbB/PsbC family. PsbB subfamily. In terms of assembly, PSII is composed of 1 copy each of membrane proteins PsbA, PsbB, PsbC, PsbD, PsbE, PsbF, PsbH, PsbI, PsbJ, PsbK, PsbL, PsbM, PsbT, PsbX, PsbY, PsbZ, Psb30/Ycf12, at least 3 peripheral proteins of the oxygen-evolving complex and a large number of cofactors. It forms dimeric complexes. Binds multiple chlorophylls. PSII binds additional chlorophylls, carotenoids and specific lipids. serves as cofactor.

The protein resides in the plastid. It is found in the chloroplast thylakoid membrane. One of the components of the core complex of photosystem II (PSII). It binds chlorophyll and helps catalyze the primary light-induced photochemical processes of PSII. PSII is a light-driven water:plastoquinone oxidoreductase, using light energy to abstract electrons from H(2)O, generating O(2) and a proton gradient subsequently used for ATP formation. The chain is Photosystem II CP47 reaction center protein from Hordeum vulgare (Barley).